The following is a 102-amino-acid chain: Protein PDF (102 aa).

The N-terminal stretch at Met-1 to Ala-24 is a signal peptide. An Alanine amide modification is found at Ala-100.

Belongs to the arthropod PDH family. Predominantly expressed in adult head. Expressed at higher level in males than in females. In adult brain, it is specifically expressed in the ventral lateral neurons (LNvs) as well as in 2-4 tritocerebral cells and 4-6 abdominal cells.

The protein resides in the secreted. Neuropeptide PDF is the main transmitter regulating circadian locomotor rhythms. Required to maintain behavioral rhythms under constant conditions by coordinating pacemaker interactions in the circadian system. Together with CCHa1, involved in regulating intensity and periodicity of daytime activity, possibly by modulating rhythmic expression of circadian protein PER/period in a subset of clock neurons, but not TIM/timeless. Acts on small and large ventral lateral neurons to control sleep and regulates the state transition from sleep to wake. The chain is Protein PDF (Pdf) from Drosophila melanogaster (Fruit fly).